The chain runs to 352 residues: tRNA pseudouridine synthase D (352 aa).

The active-site Nucleophile is the Asp81. One can recognise a TRUD domain in the interval 157 to 303 (GIPNYFGVQR…MEHERRILRL (147 aa)).

It belongs to the pseudouridine synthase TruD family.

The enzyme catalyses uridine(13) in tRNA = pseudouridine(13) in tRNA. Responsible for synthesis of pseudouridine from uracil-13 in transfer RNAs. In Pseudomonas syringae pv. tomato (strain ATCC BAA-871 / DC3000), this protein is tRNA pseudouridine synthase D.